Consider the following 490-residue polypeptide: Type I restriction enzyme EcoEI methylase subunit (490 aa).

S-adenosyl-L-methionine-binding positions include 163 to 168 (EFYTPR), 193 to 195 (TGG), and glutamate 226.

This sequence belongs to the N(4)/N(6)-methyltransferase family. As to quaternary structure, the type I restriction/modification system is composed of three polypeptides R, M and S; the restriction enzyme has stoichiometry R(2)M(2)S(1) while the methyltransferase is M(2)S(1).

It carries out the reaction a 2'-deoxyadenosine in DNA + S-adenosyl-L-methionine = an N(6)-methyl-2'-deoxyadenosine in DNA + S-adenosyl-L-homocysteine + H(+). In terms of biological role, the subtype gamma methyltransferase (M) subunit of a type I restriction enzyme. The M and S subunits together form a methyltransferase (MTase) that methylates two adenine residues of the sequence 5'-GAGN(7)ATGC-3'. In the presence of the R subunit the complex can also act as an endonuclease, binding to the same target sequence but cutting the DNA some distance from this site. Whether the DNA is cut or modified depends on the methylation state of the target sequence. When the target site is unmodified, the DNA is cut. When the target site is hemimethylated, the complex acts as a maintenance MTase modifying the DNA so that both strands become methylated. After locating a non-methylated recognition site, the enzyme complex serves as a molecular motor that translocates DNA in an ATP-dependent manner until a collision occurs that triggers cleavage. This Escherichia coli protein is Type I restriction enzyme EcoEI methylase subunit (hsdM).